The following is a 196-amino-acid chain: Holliday junction branch migration complex subunit RuvA (196 aa).

The interval 1-64 (MIDRLRGQLV…EDAMLLFGFA (64 aa)) is domain I. The segment at 65-143 (TREEREAFDA…AAAGGGGGVA (79 aa)) is domain II. Residues 144 to 153 (AGEGDGPFME) form a flexible linker region. Positions 153-196 (EAREALTGLGYSLEEAERALRDVPPQETVEQYIKAALRKIGGRR) are domain III.

Belongs to the RuvA family. As to quaternary structure, homotetramer. Forms an RuvA(8)-RuvB(12)-Holliday junction (HJ) complex. HJ DNA is sandwiched between 2 RuvA tetramers; dsDNA enters through RuvA and exits via RuvB. An RuvB hexamer assembles on each DNA strand where it exits the tetramer. Each RuvB hexamer is contacted by two RuvA subunits (via domain III) on 2 adjacent RuvB subunits; this complex drives branch migration. In the full resolvosome a probable DNA-RuvA(4)-RuvB(12)-RuvC(2) complex forms which resolves the HJ.

The protein localises to the cytoplasm. Its function is as follows. The RuvA-RuvB-RuvC complex processes Holliday junction (HJ) DNA during genetic recombination and DNA repair, while the RuvA-RuvB complex plays an important role in the rescue of blocked DNA replication forks via replication fork reversal (RFR). RuvA specifically binds to HJ cruciform DNA, conferring on it an open structure. The RuvB hexamer acts as an ATP-dependent pump, pulling dsDNA into and through the RuvAB complex. HJ branch migration allows RuvC to scan DNA until it finds its consensus sequence, where it cleaves and resolves the cruciform DNA. The protein is Holliday junction branch migration complex subunit RuvA of Rubrobacter xylanophilus (strain DSM 9941 / JCM 11954 / NBRC 16129 / PRD-1).